Reading from the N-terminus, the 369-residue chain is Transposase for insertion sequence element IS1201 (369 aa).

This sequence belongs to the transposase mutator family.

Its function is as follows. Required for the transposition of the insertion element. This Lactobacillus helveticus (Lactobacillus suntoryeus) protein is Transposase for insertion sequence element IS1201.